The sequence spans 491 residues: Probable protein phosphatase 2C 52 (491 aa).

The span at 1–11 shows a compositional bias: basic and acidic residues; the sequence is MVYDGAVKDQE. Positions 1–211 are disordered; that stretch reads MVYDGAVKDQ…REREKERERV (211 aa). A compositionally biased stretch (low complexity) spans 12-54; sequence SSANPASASAALSEASAAASEVTAAAAAGAGAGAAEEGAAVSG. Positions 66 to 78 are enriched in basic residues; that stretch reads GVRHPLKHRRFRA. Over residues 95–105 the composition is skewed to acidic residues; that stretch reads VADEEASEVEQ. Residues 187–211 are compositionally biased toward basic and acidic residues; that stretch reads VEEKKHKDQENKHKEREREKERERV. A PPM-type phosphatase domain is found at 229-475; that stretch reads SCGYSSFRGK…DNITCIVVKF (247 aa). Residues aspartate 265, glycine 266, aspartate 427, and aspartate 466 each coordinate Mn(2+).

Belongs to the PP2C family. The cofactor is Mg(2+). Mn(2+) serves as cofactor.

The catalysed reaction is O-phospho-L-seryl-[protein] + H2O = L-seryl-[protein] + phosphate. The enzyme catalyses O-phospho-L-threonyl-[protein] + H2O = L-threonyl-[protein] + phosphate. This chain is Probable protein phosphatase 2C 52, found in Oryza sativa subsp. japonica (Rice).